The sequence spans 540 residues: MIITNTIIIILIISPSFCQIDITKLQRVGVLVNNPKGMKISQNFETRYLILSLIPKIENSHSCGDQQINQYKKLLDRLIIPLYDGLKLQKDVIVVSHETNNNTNSRTKRFFGEIIGTIAIGIATSAQITAAVALVEAKQAKSDIEKLKEAIRDTNKAVQSIQSSVGNLIVAVKSVQDYVNNEIVPSITRLGCEAAGLKLGIALTQHYSELTNIFGDNIGTLKEKGIKLQGIASLYHTNITEIFTTSTVDQYDIYDLLFTESIKMRVIDVDLSDYSITLQVRLPLLTKISNTQIYKVDSISYNIQGKEWYIPLPNHIMTKGAFLGGADIKECIEAFSSYICPSDPGFTLNHEIENCLSGNITQCPKTIVTSDVVPRYAFVNGGLIANCITTTCTCNGVDNRINQSPDQGIKIITHKECQVIGINGMLFSTNREGTLATYTFDDIILNNSVALNPIDISMELNKAKLELEESKEWIKKSNQKLDSVGSWYQSSATITIIIVMIVVLFIINITIIVVIIRHHRIQGKNQNDKNSEPYVLTSRQ.

The signal sequence occupies residues 1 to 18 (MIITNTIIIILIISPSFC). Residues 19-495 (QIDITKLQRV…SWYQSSATIT (477 aa)) lie on the Extracellular side of the membrane. An intrachain disulfide couples Cys63 to Cys192. Asn101 carries an N-linked (GlcNAc...) asparagine; by host glycan. The interval 110-134 (FFGEIIGTIAIGIATSAQITAAVAL) is fusion peptide. Residues 135–163 (VEAKQAKSDIEKLKEAIRDTNKAVQSIQS) adopt a coiled-coil conformation. The N-linked (GlcNAc...) asparagine; by host glycan is linked to Asn238. 4 disulfide bridges follow: Cys331–Cys340, Cys355–Cys363, Cys387–Cys392, and Cys394–Cys417. N-linked (GlcNAc...) asparagine; by host glycosylation is present at Asn359. Asn446 carries an N-linked (GlcNAc...) asparagine; by host glycan. The stretch at 459–484 (ELNKAKLELEESKEWIKKSNQKLDSV) forms a coiled coil. The helical transmembrane segment at 496 to 516 (IIIVMIVVLFIINITIIVVII) threads the bilayer. Topologically, residues 517–540 (RHHRIQGKNQNDKNSEPYVLTSRQ) are cytoplasmic.

This sequence belongs to the paramyxoviruses fusion glycoprotein family. Homotrimer of disulfide-linked F1-F2. In terms of processing, the inactive precursor F0 is glycosylated and proteolytically cleaved into F1 and F2 to be functionally active. The cleavage is mediated by cellular proteases during the transport and maturation of the polypeptide.

Its subcellular location is the virion membrane. It localises to the host cell membrane. Class I viral fusion protein. Under the current model, the protein has at least 3 conformational states: pre-fusion native state, pre-hairpin intermediate state, and post-fusion hairpin state. During viral and plasma cell membrane fusion, the heptad repeat (HR) regions assume a trimer-of-hairpins structure, positioning the fusion peptide in close proximity to the C-terminal region of the ectodomain. The formation of this structure appears to drive apposition and subsequent fusion of viral and plasma cell membranes. Directs fusion of viral and cellular membranes leading to delivery of the nucleocapsid into the cytoplasm. This fusion is pH independent and occurs directly at the outer cell membrane. The trimer of F1-F2 (F protein) probably interacts with HN at the virion surface. Upon HN binding to its cellular receptor, the hydrophobic fusion peptide is unmasked and interacts with the cellular membrane, inducing the fusion between cell and virion membranes. Later in infection, F proteins expressed at the plasma membrane of infected cells could mediate fusion with adjacent cells to form syncytia, a cytopathic effect that could lead to tissue necrosis. In Bos taurus (Bovine), this protein is Fusion glycoprotein F0 (F).